An 81-amino-acid polypeptide reads, in one-letter code: Large ribosomal subunit protein bL31B (81 aa).

Belongs to the bacterial ribosomal protein bL31 family. Type B subfamily. As to quaternary structure, part of the 50S ribosomal subunit.

The polypeptide is Large ribosomal subunit protein bL31B (Bdellovibrio bacteriovorus (strain ATCC 15356 / DSM 50701 / NCIMB 9529 / HD100)).